A 54-amino-acid polypeptide reads, in one-letter code: Chymosin (54 aa).

Positions 1 to 27 (SEITRVPLHKGKSLRKALKEHGLLEBF) are cleaved as a propeptide — activation peptide.

The protein belongs to the peptidase A1 family. In terms of assembly, monomer.

The enzyme catalyses Broad specificity similar to that of pepsin A. Clots milk by cleavage of a single 104-Ser-Phe-|-Met-Ala-107 bond in kappa-chain of casein.. Functionally, chymosin is synthesized in the mucosa of the stomach. The enzyme hydrolyzes casein to paracasein. The chain is Chymosin (CYM) from Felis catus (Cat).